Here is a 349-residue protein sequence, read N- to C-terminus: Isopentenyl-diphosphate delta-isomerase (349 aa).

Residue 7-8 (RK) participates in substrate binding. Residues Ser65, 66-68 (SMT), Ser96, and Asn124 contribute to the FMN site. Residue 96-98 (SQR) participates in substrate binding. A substrate-binding site is contributed by Gln159. Glu160 is a binding site for Mg(2+). Residues Lys191, Thr221, 271-273 (GIR), and 292-293 (AA) each bind FMN.

It belongs to the IPP isomerase type 2 family. In terms of assembly, homooctamer. Dimer of tetramers. It depends on FMN as a cofactor. Requires NADPH as cofactor. The cofactor is Mg(2+).

It is found in the cytoplasm. It catalyses the reaction isopentenyl diphosphate = dimethylallyl diphosphate. Its function is as follows. Involved in the biosynthesis of isoprenoids. Catalyzes the 1,3-allylic rearrangement of the homoallylic substrate isopentenyl (IPP) to its allylic isomer, dimethylallyl diphosphate (DMAPP). The chain is Isopentenyl-diphosphate delta-isomerase from Synechocystis sp. (strain ATCC 27184 / PCC 6803 / Kazusa).